The sequence spans 104 residues: PE-PGRS family protein PE_PGRS60 (104 aa).

The region spanning 1–60 (MSYVIAAPEALVAAATDLATLGSTIGAANAAAAGSTTALLTAGADEVSAAIAAYSECTAR) is the PE domain. The segment at 64–104 (HSVRGRRRSMSGSCRPWPQVGAPMRPPRPPASRRCRARSIC) is disordered. Basic residues predominate over residues 94-104 (ASRRCRARSIC).

This sequence belongs to the mycobacterial PE family. PGRS subfamily.

Binds fibronectin. May contribute to pathogenicity. The chain is PE-PGRS family protein PE_PGRS60 from Mycobacterium tuberculosis (strain ATCC 25618 / H37Rv).